A 1396-amino-acid chain; its full sequence is DNA-directed RNA polymerase subunit beta (1396 aa).

This sequence belongs to the RNA polymerase beta chain family. In terms of assembly, the RNAP catalytic core consists of 2 alpha, 1 beta, 1 beta' and 1 omega subunit. When a sigma factor is associated with the core the holoenzyme is formed, which can initiate transcription.

It carries out the reaction RNA(n) + a ribonucleoside 5'-triphosphate = RNA(n+1) + diphosphate. In terms of biological role, DNA-dependent RNA polymerase catalyzes the transcription of DNA into RNA using the four ribonucleoside triphosphates as substrates. This chain is DNA-directed RNA polymerase subunit beta, found in Erythrobacter litoralis (strain HTCC2594).